The primary structure comprises 158 residues: Protein-export protein SecB (158 aa).

The protein belongs to the SecB family. As to quaternary structure, homotetramer, a dimer of dimers. One homotetramer interacts with 1 SecA dimer.

Its subcellular location is the cytoplasm. Its function is as follows. One of the proteins required for the normal export of preproteins out of the cell cytoplasm. It is a molecular chaperone that binds to a subset of precursor proteins, maintaining them in a translocation-competent state. It also specifically binds to its receptor SecA. The polypeptide is Protein-export protein SecB (Anaplasma phagocytophilum (strain HZ)).